The primary structure comprises 178 residues: Nicotinamide-nucleotide adenylyltransferase (178 aa).

Belongs to the archaeal NMN adenylyltransferase family.

It localises to the cytoplasm. It catalyses the reaction beta-nicotinamide D-ribonucleotide + ATP + H(+) = diphosphate + NAD(+). The protein operates within cofactor biosynthesis; NAD(+) biosynthesis; NAD(+) from nicotinamide D-ribonucleotide: step 1/1. This is Nicotinamide-nucleotide adenylyltransferase from Caldivirga maquilingensis (strain ATCC 700844 / DSM 13496 / JCM 10307 / IC-167).